A 568-amino-acid chain; its full sequence is Mannitol 2-dehydrogenase (568 aa).

Residue 109 to 120 (IVHVGVGGFHRA) coordinates NAD(+).

It belongs to the mannitol dehydrogenase family. As to quaternary structure, monomer.

It carries out the reaction D-mannitol + NAD(+) = D-fructose + NADH + H(+). Its function is as follows. Catalyzes the NAD(H)-dependent interconversion of D-fructose and D-mannitol in the mannitol metabolic pathway. The sequence is that of Mannitol 2-dehydrogenase from Phaeosphaeria nodorum (strain SN15 / ATCC MYA-4574 / FGSC 10173) (Glume blotch fungus).